A 169-amino-acid chain; its full sequence is MKKSKTYDIVTIAIVAALYVILTMTPGLSAISYGPIQFRVSEMLNFTAFFNKKYIIAVTIGCMISNFLSFTWVDVIVGGLSTLVFLSLGVLLFDRFKEDYFWNGQLNKAFFFFAIFFSISMFTIALELKFVAETPFLLTWGTLALGEFASLFIGAFIMDKLGKRVDLSR.

5 helical membrane-spanning segments follow: residues 9-29 (IVTI…PGLS), 44-64 (LNFT…GCMI), 73-93 (VDVI…VLLF), 110-130 (FFFF…ELKF), and 137-157 (LLTW…GAFI).

It belongs to the vitamin uptake transporter (VUT/ECF) (TC 2.A.88) family. In E.coli forms a stable energy-coupling factor (ECF) transporter complex composed of 2 membrane-embedded substrate-binding protein (S component), 2 ATP-binding proteins (A and A' components) and 2 transmembrane proteins (T component), probably with a stoichiometry of 2:1:1:2. May be able to interact with more than 1 S component at a time.

It localises to the cell membrane. Functionally, probably a queuosine precursor-binding protein that interacts with the energy-coupling factor (ECF) ABC-transporter complex. Unlike classic ABC transporters this ECF transporter provides the energy necessary to transport a number of different substrates. The substrates themselves are bound by transmembrane, not extracytoplasmic soluble proteins. The chain is Queuosine precursor transporter QueT (queT) from Lactococcus lactis subsp. cremoris (strain MG1363).